We begin with the raw amino-acid sequence, 171 residues long: uncharacterized protein (171 aa).

This sequence belongs to the IUNH family.

This is an uncharacterized protein from Acidianus ambivalens (Desulfurolobus ambivalens).